The following is a 250-amino-acid chain: Intermembrane phospholipid transport system lipoprotein MlaA (250 aa).

The first 18 residues, 1–18 (MKTKTILTALLSAIALTG), serve as a signal peptide directing secretion. C19 is lipidated: N-palmitoyl cysteine. C19 is lipidated: S-diacylglycerol cysteine.

The protein belongs to the MlaA family.

It localises to the cell outer membrane. Functionally, involved in a phospholipid transport pathway that maintains lipid asymmetry in the outer membrane by retrograde trafficking of phospholipids from the outer membrane to the inner membrane. In Haemophilus influenzae (strain ATCC 51907 / DSM 11121 / KW20 / Rd), this protein is Intermembrane phospholipid transport system lipoprotein MlaA.